The sequence spans 331 residues: Porphobilinogen deaminase (331 aa).

Cys-248 is modified (S-(dipyrrolylmethanemethyl)cysteine). Residues 307-331 form a disordered region; it reads QLLQAPKQTGEPHDPDRHDKGTGRP. The span at 316-331 shows a compositional bias: basic and acidic residues; the sequence is GEPHDPDRHDKGTGRP.

Belongs to the HMBS family. Monomer. It depends on dipyrromethane as a cofactor.

It carries out the reaction 4 porphobilinogen + H2O = hydroxymethylbilane + 4 NH4(+). The protein operates within porphyrin-containing compound metabolism; protoporphyrin-IX biosynthesis; coproporphyrinogen-III from 5-aminolevulinate: step 2/4. Its function is as follows. Tetrapolymerization of the monopyrrole PBG into the hydroxymethylbilane pre-uroporphyrinogen in several discrete steps. The polypeptide is Porphobilinogen deaminase (Acidothermus cellulolyticus (strain ATCC 43068 / DSM 8971 / 11B)).